A 109-amino-acid chain; its full sequence is Large ribosomal subunit protein uL22 (109 aa).

This sequence belongs to the universal ribosomal protein uL22 family. In terms of assembly, part of the 50S ribosomal subunit.

In terms of biological role, this protein binds specifically to 23S rRNA; its binding is stimulated by other ribosomal proteins, e.g. L4, L17, and L20. It is important during the early stages of 50S assembly. It makes multiple contacts with different domains of the 23S rRNA in the assembled 50S subunit and ribosome. Its function is as follows. The globular domain of the protein is located near the polypeptide exit tunnel on the outside of the subunit, while an extended beta-hairpin is found that lines the wall of the exit tunnel in the center of the 70S ribosome. In Psychrobacter cryohalolentis (strain ATCC BAA-1226 / DSM 17306 / VKM B-2378 / K5), this protein is Large ribosomal subunit protein uL22.